Consider the following 349-residue polypeptide: Sphingolipid C4-hydroxylase SUR2 (349 aa).

A run of 5 helical transmembrane segments spans residues 9–29, 50–70, 99–119, 148–168, and 209–229; these read AAGS…MHYA, VLAL…FHVI, FLEV…FMHF, IYYG…FLFV, and PVEG…LTHL. The region spanning 162-297 is the Fatty acid hydroxylase domain; sequence FAGFLFVDTW…FTFWDNLFQT (136 aa).

Belongs to the sterol desaturase family.

The protein resides in the endoplasmic reticulum membrane. It catalyses the reaction sphinganine + 2 Fe(II)-[cytochrome b5] + O2 + 2 H(+) = (4R)-hydroxysphinganine + 2 Fe(III)-[cytochrome b5] + H2O. The catalysed reaction is an N-acylsphinganine + 2 Fe(II)-[cytochrome b5] + O2 + 2 H(+) = an N-acyl-(4R)-4-hydroxysphinganine + 2 Fe(III)-[cytochrome b5] + H2O. It carries out the reaction an N-acyleicosasphinganine + 2 Fe(II)-[cytochrome b5] + O2 + 2 H(+) = N-acyl-4-hydroxyeicosasphinganine + 2 Fe(III)-[cytochrome b5] + H2O. The protein operates within membrane lipid metabolism; sphingolipid biosynthesis. Functionally, required for hydroxylation of C-4 in the sphingoid moiety of ceramide. Catalyzes the conversion of sphinganine to phytosphingosine in sphingolipid biosynthesis. Involved in the response to syringomycin. The chain is Sphingolipid C4-hydroxylase SUR2 (SUR2) from Saccharomyces cerevisiae (strain ATCC 204508 / S288c) (Baker's yeast).